Consider the following 181-residue polypeptide: Cytochrome b6-f complex iron-sulfur subunit (181 aa).

The interval 1–35 is disordered; sequence MAQTGNFKSPARMSSLGQGAAPASAGAVTGGKPRE. 2 consecutive transmembrane segments (helical) span residues 53 to 73 and 114 to 134; these read VGGVGAVVAVSTLYPVVRYIV and GGSLTAVSAICTHLGCLVHWD. The region spanning 85 to 178 is the Rieske domain; that stretch reads LAVGPASDVP…VKIEDGKIVV (94 aa). The [2Fe-2S] cluster site is built by cysteine 124, histidine 126, cysteine 142, and histidine 145. A disulfide bridge links cysteine 129 with cysteine 144.

This sequence belongs to the Rieske iron-sulfur protein family. [2Fe-2S] cluster is required as a cofactor.

The protein localises to the cell inner membrane. The enzyme catalyses 2 oxidized [plastocyanin] + a plastoquinol + 2 H(+)(in) = 2 reduced [plastocyanin] + a plastoquinone + 4 H(+)(out). Component of the green S-bacteria bc-complex which consists of the Rieske protein and cytochrome b subunit and which appears to lack a cytochrome c1-equivalent. This complex has a comparatively low redox potential. This is Cytochrome b6-f complex iron-sulfur subunit (petC) from Chlorobaculum tepidum (strain ATCC 49652 / DSM 12025 / NBRC 103806 / TLS) (Chlorobium tepidum).